Reading from the N-terminus, the 846-residue chain is Translation initiation factor IF-2 (846 aa).

The tract at residues 199–219 is disordered; that stretch reads KREEEEKKSKAKKAGGKGFKK. The span at 207–219 shows a compositional bias: basic residues; sequence SKAKKAGGKGFKK. The region spanning 345–512 is the tr-type G domain; the sequence is SRAPVVTIMG…AVLLQSEVLE (168 aa). The G1 stretch occupies residues 354–361; that stretch reads GHVDHGKT. GTP is bound at residue 354–361; it reads GHVDHGKT. Residues 379–383 are G2; it reads GITQH. Positions 400–403 are G3; sequence DTPG. GTP-binding positions include 400 to 404 and 454 to 457; these read DTPGH and NKID. The segment at 454–457 is G4; it reads NKID. Residues 490-492 form a G5 region; the sequence is SAK.

It belongs to the TRAFAC class translation factor GTPase superfamily. Classic translation factor GTPase family. IF-2 subfamily.

It localises to the cytoplasm. Its function is as follows. One of the essential components for the initiation of protein synthesis. Protects formylmethionyl-tRNA from spontaneous hydrolysis and promotes its binding to the 30S ribosomal subunits. Also involved in the hydrolysis of GTP during the formation of the 70S ribosomal complex. The polypeptide is Translation initiation factor IF-2 (Francisella tularensis subsp. holarctica (strain LVS)).